The chain runs to 414 residues: 5-aminolevulinate synthase (414 aa).

3 residues coordinate substrate: Arg-22, Ser-133, and Lys-152. Residues Ser-185, His-213, and Thr-241 each coordinate pyridoxal 5'-phosphate. The active site involves Lys-244. Lys-244 is modified (N6-(pyridoxal phosphate)lysine). Positions 273 and 274 each coordinate pyridoxal 5'-phosphate. Thr-359 is a substrate binding site.

Belongs to the class-II pyridoxal-phosphate-dependent aminotransferase family. Homodimer. Pyridoxal 5'-phosphate is required as a cofactor.

It catalyses the reaction succinyl-CoA + glycine + H(+) = 5-aminolevulinate + CO2 + CoA. The protein operates within porphyrin-containing compound metabolism; protoporphyrin-IX biosynthesis; 5-aminolevulinate from glycine: step 1/1. The polypeptide is 5-aminolevulinate synthase (hemA) (Rickettsia typhi (strain ATCC VR-144 / Wilmington)).